The following is a 117-amino-acid chain: Large ribosomal subunit protein bL17 (117 aa).

Belongs to the bacterial ribosomal protein bL17 family. Part of the 50S ribosomal subunit. Contacts protein L32.

The chain is Large ribosomal subunit protein bL17 from Exiguobacterium sp. (strain ATCC BAA-1283 / AT1b).